Here is a 179-residue protein sequence, read N- to C-terminus: Large ribosomal subunit protein uL6 (179 aa).

The protein belongs to the universal ribosomal protein uL6 family. As to quaternary structure, part of the 50S ribosomal subunit.

Its function is as follows. This protein binds to the 23S rRNA, and is important in its secondary structure. It is located near the subunit interface in the base of the L7/L12 stalk, and near the tRNA binding site of the peptidyltransferase center. The sequence is that of Large ribosomal subunit protein uL6 from Crocosphaera subtropica (strain ATCC 51142 / BH68) (Cyanothece sp. (strain ATCC 51142)).